We begin with the raw amino-acid sequence, 1363 residues long: DNA-directed RNA polymerase subunit beta' (1363 aa).

The disordered stretch occupies residues 1–39 (MTSTPSKSRKSSKGSKAAKAAASAPETRPLAKTPPPFRN). Residues 14-24 (GSKAAKAAASA) are compositionally biased toward low complexity. Zn(2+)-binding residues include C248, C315, C322, and C325.

The protein belongs to the RNA polymerase beta' chain family. RpoC2 subfamily. In terms of assembly, in cyanobacteria the RNAP catalytic core is composed of 2 alpha, 1 beta, 1 beta', 1 gamma and 1 omega subunit. When a sigma factor is associated with the core the holoenzyme is formed, which can initiate transcription. Zn(2+) is required as a cofactor.

It carries out the reaction RNA(n) + a ribonucleoside 5'-triphosphate = RNA(n+1) + diphosphate. Functionally, DNA-dependent RNA polymerase catalyzes the transcription of DNA into RNA using the four ribonucleoside triphosphates as substrates. The chain is DNA-directed RNA polymerase subunit beta' from Synechococcus sp. (strain WH7803).